We begin with the raw amino-acid sequence, 420 residues long: Lactosylceramide alpha-2,3-sialyltransferase (420 aa).

A disordered region spans residues 1 to 39; the sequence is MRKKAAGGAERRPLKPRTEAAAAAPAGRAMPSDHSRMKL. Over 1–67 the chain is Cytoplasmic; that stretch reads MRKKAAGGAE…MRRPNLLLKD (67 aa). Residues 9 to 18 are compositionally biased toward basic and acidic residues; it reads AERRPLKPRT. Over residues 20 to 29 the composition is skewed to low complexity; sequence AAAAAPAGRA. Residues 68 to 88 traverse the membrane as a helical segment; it reads ILKCTLLLFGVWILFYILKLN. The Lumenal portion of the chain corresponds to 89–420; sequence HTTEECDMKR…DLSGGIHSEF (332 aa). Cysteines 197 and 355 form a disulfide. N-linked (GlcNAc...) asparagine glycosylation occurs at N238.

This sequence belongs to the glycosyltransferase 29 family.

The protein localises to the golgi apparatus membrane. It catalyses the reaction a beta-D-Gal-(1-&gt;4)-beta-D-Glc-(1&lt;-&gt;1)-Cer(d18:1(4E)) + CMP-N-acetyl-beta-neuraminate = a ganglioside GM3 (d18:1(4E)) + CMP + H(+). The catalysed reaction is ganglioside GA2 (d18:1(4E)/18:0) + CMP-N-acetyl-beta-neuraminate = ganglioside GM2 (d18:1(4E)/18:0) + CMP + H(+). The enzyme catalyses a beta-D-Gal-(1&lt;-&gt;1')-ceramide + CMP-N-acetyl-beta-neuraminate = N-acetyl-alpha-neuraminosyl-(2-&gt;3)-beta-D-galactosyl-(1&lt;-&gt;1')-ceramide + CMP + H(+). It carries out the reaction ganglioside GA1 (d18:1(4E)/18:0) + CMP-N-acetyl-beta-neuraminate = ganglioside GM1 (d18:1(4E)/18:0) + CMP + H(+). Transfers the sialyl group (N-acetyl-alpha-neuraminyl or NeuAc) from CMP-NeuAc to the non-reducing terminal galactose (Gal) of glycosphingolipids forming gangliosides (important molecules involved in the regulation of multiple cellular processes, including cell proliferation and differentiation, apoptosis, embryogenesis, development, and oncogenesis). Mainly involved in the biosynthesis of ganglioside GM3 but can also use different glycolipids as substrate acceptors such as D-galactosylceramide (GalCer), asialo-GM2 (GA2) and asialo-GM1 (GA1), although less preferentially than beta-D-Gal-(1-&gt;4)-beta-D-Glc-(1&lt;-&gt;1)-Cer (LacCer). The protein is Lactosylceramide alpha-2,3-sialyltransferase (ST3GAL5) of Bos taurus (Bovine).